Here is a 100-residue protein sequence, read N- to C-terminus: UPF0213 protein YhbQ (100 aa).

Positions 2–77 (TPWFLYLIRT…KQLTKRQKER (76 aa)) constitute a GIY-YIG domain.

Belongs to the UPF0213 family.

This is UPF0213 protein YhbQ from Escherichia coli O7:K1 (strain IAI39 / ExPEC).